The primary structure comprises 355 residues: 4-dimethylallyltryptophan N-methyltransferase easF (355 aa).

Belongs to the methyltransferase superfamily. As to quaternary structure, homodimer.

It catalyses the reaction 4-(3-methylbut-2-enyl)-L-tryptophan + S-adenosyl-L-methionine = 4-(3-methylbut-2-enyl)-L-abrine + S-adenosyl-L-homocysteine + H(+). The protein operates within alkaloid biosynthesis; ergot alkaloid biosynthesis. Functionally, 4-dimethylallyltryptophan N-methyltransferase; part of the gene cluster that mediates the biosynthesis of fungal ergot alkaloid. DmaW catalyzes the first step of ergot alkaloid biosynthesis by condensing dimethylallyl diphosphate (DMAP) and tryptophan to form 4-dimethylallyl-L-tryptophan. The second step is catalyzed by the methyltransferase easF that methylates 4-dimethylallyl-L-tryptophan in the presence of S-adenosyl-L-methionine, resulting in the formation of 4-dimethylallyl-L-abrine. The catalase easC and the FAD-dependent oxidoreductase easE then transform 4-dimethylallyl-L-abrine to chanoclavine-I which is further oxidized by easD in the presence of NAD(+), resulting in the formation of chanoclavine-I aldehyde. Agroclavine dehydrogenase easG then mediates the conversion of chanoclavine-I aldehyde to agroclavine via a non-enzymatic adduct reaction: the substrate is an iminium intermediate that is formed spontaneously from chanoclavine-I aldehyde in the presence of glutathione. Further conversion of agroclavine to paspalic acid is a two-step process involving oxidation of agroclavine to elymoclavine and of elymoclavine to paspalic acid, the second step being performed by the elymoclavine oxidase cloA. However, cloA does not encode a functional enzyme indicating that C.fusiformis terminates its ergot alkaloid pathway at elymoclavine. The protein is 4-dimethylallyltryptophan N-methyltransferase easF of Claviceps fusiformis (Ergot fungus).